A 251-amino-acid polypeptide reads, in one-letter code: Phosphoribosylaminoimidazole-succinocarboxamide synthase (251 aa).

The protein belongs to the SAICAR synthetase family.

It carries out the reaction 5-amino-1-(5-phospho-D-ribosyl)imidazole-4-carboxylate + L-aspartate + ATP = (2S)-2-[5-amino-1-(5-phospho-beta-D-ribosyl)imidazole-4-carboxamido]succinate + ADP + phosphate + 2 H(+). It participates in purine metabolism; IMP biosynthesis via de novo pathway; 5-amino-1-(5-phospho-D-ribosyl)imidazole-4-carboxamide from 5-amino-1-(5-phospho-D-ribosyl)imidazole-4-carboxylate: step 1/2. This Ruegeria pomeroyi (strain ATCC 700808 / DSM 15171 / DSS-3) (Silicibacter pomeroyi) protein is Phosphoribosylaminoimidazole-succinocarboxamide synthase.